Reading from the N-terminus, the 503-residue chain is Probable cytosol aminopeptidase (503 aa).

Mn(2+) contacts are provided by lysine 274 and aspartate 279. Lysine 286 is a catalytic residue. Residues aspartate 297, aspartate 356, and glutamate 358 each coordinate Mn(2+). Arginine 360 is a catalytic residue.

The protein belongs to the peptidase M17 family. The cofactor is Mn(2+).

The protein resides in the cytoplasm. It catalyses the reaction Release of an N-terminal amino acid, Xaa-|-Yaa-, in which Xaa is preferably Leu, but may be other amino acids including Pro although not Arg or Lys, and Yaa may be Pro. Amino acid amides and methyl esters are also readily hydrolyzed, but rates on arylamides are exceedingly low.. The catalysed reaction is Release of an N-terminal amino acid, preferentially leucine, but not glutamic or aspartic acids.. Presumably involved in the processing and regular turnover of intracellular proteins. Catalyzes the removal of unsubstituted N-terminal amino acids from various peptides. The polypeptide is Probable cytosol aminopeptidase (Burkholderia orbicola (strain AU 1054)).